Here is a 253-residue protein sequence, read N- to C-terminus: E3 ubiquitin-protein ligase MARCHF3 (253 aa).

The RING-CH-type zinc-finger motif lies at serine 63–glutamate 123. Positions 71, 74, 87, 89, 97, 100, 113, and 116 each coordinate Zn(2+). 2 consecutive transmembrane segments (helical) span residues leucine 145–leucine 165 and alanine 182–valine 202. Residues serine 237 and serine 243 each carry the phosphoserine modification.

As to quaternary structure, interacts with MARCHF2 and STX6.

It localises to the cytoplasmic vesicle membrane. Its subcellular location is the early endosome membrane. It catalyses the reaction S-ubiquitinyl-[E2 ubiquitin-conjugating enzyme]-L-cysteine + [acceptor protein]-L-lysine = [E2 ubiquitin-conjugating enzyme]-L-cysteine + N(6)-ubiquitinyl-[acceptor protein]-L-lysine.. Its pathway is protein modification; protein ubiquitination. In terms of biological role, E3 ubiquitin-protein ligase which may be involved in endosomal trafficking. E3 ubiquitin ligases accept ubiquitin from an E2 ubiquitin-conjugating enzyme in the form of a thioester and then directly transfer the ubiquitin to targeted substrates. This Homo sapiens (Human) protein is E3 ubiquitin-protein ligase MARCHF3.